The sequence spans 156 residues: Small ribosomal subunit protein uS7 (156 aa).

This sequence belongs to the universal ribosomal protein uS7 family. In terms of assembly, part of the 30S ribosomal subunit. Contacts proteins S9 and S11.

Its function is as follows. One of the primary rRNA binding proteins, it binds directly to 16S rRNA where it nucleates assembly of the head domain of the 30S subunit. Is located at the subunit interface close to the decoding center, probably blocks exit of the E-site tRNA. In Nitratiruptor sp. (strain SB155-2), this protein is Small ribosomal subunit protein uS7.